Reading from the N-terminus, the 501-residue chain is Glycerol kinase (501 aa).

Residue T12 coordinates ADP. ATP is bound by residues T12, T13, and S14. T12 is a binding site for sn-glycerol 3-phosphate. R16 serves as a coordination point for ADP. Sn-glycerol 3-phosphate-binding residues include R82, E83, Y135, and D244. Glycerol is bound by residues R82, E83, Y135, D244, and Q245. Positions 266, 309, 409, and 413 each coordinate ADP. ATP-binding residues include T266, G309, and G409.

Belongs to the FGGY kinase family.

The enzyme catalyses glycerol + ATP = sn-glycerol 3-phosphate + ADP + H(+). It functions in the pathway polyol metabolism; glycerol degradation via glycerol kinase pathway; sn-glycerol 3-phosphate from glycerol: step 1/1. With respect to regulation, inhibited by fructose 1,6-bisphosphate (FBP). Functionally, key enzyme in the regulation of glycerol uptake and metabolism. Catalyzes the phosphorylation of glycerol to yield sn-glycerol 3-phosphate. This chain is Glycerol kinase, found in Coxiella burnetii (strain Dugway 5J108-111).